The following is a 157-amino-acid chain: Endoribonuclease YbeY (157 aa).

Zn(2+) is bound by residues histidine 115, histidine 119, and histidine 125.

The protein belongs to the endoribonuclease YbeY family. Zn(2+) serves as cofactor.

The protein resides in the cytoplasm. Single strand-specific metallo-endoribonuclease involved in late-stage 70S ribosome quality control and in maturation of the 3' terminus of the 16S rRNA. This Micrococcus luteus (strain ATCC 4698 / DSM 20030 / JCM 1464 / CCM 169 / CCUG 5858 / IAM 1056 / NBRC 3333 / NCIMB 9278 / NCTC 2665 / VKM Ac-2230) (Micrococcus lysodeikticus) protein is Endoribonuclease YbeY.